The following is a 746-amino-acid chain: Ferrienterobactin receptor (746 aa).

The first 22 residues, 1–22 (MNKKIHSLALLVNLGIYGVAQA), serve as a signal peptide directing secretion. The short motif at 34–41 (DTIVVTAA) is the TonB box element. The 128-residue stretch at 42–169 (EQNLQAPGVS…AGGVVNIITK (128 aa)) folds into the TBDR plug domain. A disordered region spans residues 76 to 96 (GVNLTGNSTSGQRGNNRQIDI). The span at 79–93 (LTGNSTSGQRGNNRQ) shows a compositional bias: polar residues. Positions 174–746 (EWHGSWDAYF…TWYMSVNTHF (573 aa)) constitute a TBDR beta-barrel domain. Positions 729 to 746 (YTYNEPGRTWYMSVNTHF) match the TonB C-terminal box motif.

Belongs to the TonB-dependent receptor family.

The protein resides in the cell outer membrane. This protein is involved in the initial step of iron uptake by binding ferrienterobactin (Fe-ENT), an iron chelatin siderophore that allows E.coli to extract iron from the environment. FepA also acts as a receptor for colicins B and D. This Escherichia coli (strain K12) protein is Ferrienterobactin receptor (fepA).